The sequence spans 467 residues: ADAM DEC1 (467 aa).

The first 33 residues, 1-33 (MLPGTSRLPTEASMSWVLLSVLWLIIQIQVIDA), serve as a signal peptide directing secretion. Positions 34 to 208 (TLTPELKPHE…LRTSRSLKNP (175 aa)) are excised as a propeptide. Asparagine 61 and asparagine 236 each carry an N-linked (GlcNAc...) asparagine glycan. The Peptidase M12B domain maps to 217 to 411 (KYIGLFLVLD…RNARCLLLAP (195 aa)). Intrachain disulfides connect cysteine 327–cysteine 406 and cysteine 368–cysteine 373. Position 351 (histidine 351) interacts with Zn(2+). Residue glutamate 352 is part of the active site. Zn(2+) is bound by residues histidine 355 and aspartate 361. In terms of domain architecture, Disintegrin spans 418 to 467 (KPTCGNQVLDVGEECDCGSPEECTNLCCEPLTCRLKSQPDCSEASNHITE).

It depends on Zn(2+) as a cofactor. In terms of tissue distribution, expressed highly in uterus during pregnancy.

The protein resides in the secreted. Its function is as follows. May play an important role in the control of the immune response and during pregnancy. This is ADAM DEC1 (Adamdec1) from Mus musculus (Mouse).